The chain runs to 441 residues: Protein disulfide isomerase-like 2-3 (441 aa).

An N-terminal signal peptide occupies residues 1-18 (MRPAVAAALLLVAAAVAA). Thioredoxin domains lie at 19–139 (SPVS…ALLR) and 159–276 (SEKT…ANAA). Residues C59 and C62 each act as nucleophile in the active site. An intrachain disulfide couples C59 to C62. The interval 143–166 (NGKTSAGSGGKKSGGSSEKTEPSA) is disordered. Residues C195 and C198 each act as nucleophile in the active site. An intrachain disulfide couples C195 to C198.

It belongs to the protein disulfide isomerase family.

The protein resides in the endoplasmic reticulum lumen. It carries out the reaction Catalyzes the rearrangement of -S-S- bonds in proteins.. Acts as a protein-folding catalyst that interacts with nascent polypeptides to catalyze the formation, isomerization, and reduction or oxidation of disulfide bonds. May play a role in storage protein biogenesis. This is Protein disulfide isomerase-like 2-3 (PDIL2-3) from Oryza sativa subsp. japonica (Rice).